A 293-amino-acid polypeptide reads, in one-letter code: MTNSKNRFGNKFIGAHVSAAGGVDNAPLRAREIGANAFALFTKNQRQWVAKPLEEKTISAFKANCALLGFSPQQILPHDSYLINLGAPEAEKLEKSRLAFIDEMERCQLLGLNLLNFHPGSHLEKISEKACLSLIAESINLAHQAVPDVVAVIENTAGQGSNLGWRFEHLAEIIEQVEDKSRVGVCLDTCHTFAAGYDLRTPEACETTFAEFERVVGMHYLRAMHINDSKVKLASKVDRHHALGKGEIGWDCFEYIAKDSRFDSIPLILETIEPELWPQEIEQLRKYHLSSIA.

Residues His-78, His-118, Glu-154, Asp-188, His-191, His-225, Asp-238, His-240, and Glu-270 each coordinate Zn(2+).

The protein belongs to the AP endonuclease 2 family. Zn(2+) is required as a cofactor.

It catalyses the reaction Endonucleolytic cleavage to 5'-phosphooligonucleotide end-products.. Its function is as follows. Endonuclease IV plays a role in DNA repair. It cleaves phosphodiester bonds at apurinic or apyrimidinic (AP) sites, generating a 3'-hydroxyl group and a 5'-terminal sugar phosphate. The sequence is that of Probable endonuclease 4 from Vibrio vulnificus (strain CMCP6).